A 378-amino-acid chain; its full sequence is Erythronate-4-phosphate dehydrogenase (378 aa).

S45 and T66 together coordinate substrate. Positions 146 and 175 each coordinate NAD(+). Residue R208 is part of the active site. Residue D232 coordinates NAD(+). E237 is an active-site residue. H254 serves as the catalytic Proton donor. G257 lines the NAD(+) pocket. Residue Y258 coordinates substrate.

This sequence belongs to the D-isomer specific 2-hydroxyacid dehydrogenase family. PdxB subfamily. Homodimer.

It localises to the cytoplasm. The enzyme catalyses 4-phospho-D-erythronate + NAD(+) = (R)-3-hydroxy-2-oxo-4-phosphooxybutanoate + NADH + H(+). Its pathway is cofactor biosynthesis; pyridoxine 5'-phosphate biosynthesis; pyridoxine 5'-phosphate from D-erythrose 4-phosphate: step 2/5. Its function is as follows. Catalyzes the oxidation of erythronate-4-phosphate to 3-hydroxy-2-oxo-4-phosphonooxybutanoate. This chain is Erythronate-4-phosphate dehydrogenase, found in Pectobacterium carotovorum subsp. carotovorum (strain PC1).